We begin with the raw amino-acid sequence, 361 residues long: Ribosomal RNA large subunit methyltransferase M (361 aa).

S-adenosyl-L-methionine is bound by residues serine 193, 226 to 229 (CPGG), aspartate 245, aspartate 265, and aspartate 283. Lysine 312 functions as the Proton acceptor in the catalytic mechanism.

The protein belongs to the class I-like SAM-binding methyltransferase superfamily. RNA methyltransferase RlmE family. RlmM subfamily. As to quaternary structure, monomer.

The protein resides in the cytoplasm. It catalyses the reaction cytidine(2498) in 23S rRNA + S-adenosyl-L-methionine = 2'-O-methylcytidine(2498) in 23S rRNA + S-adenosyl-L-homocysteine + H(+). In terms of biological role, catalyzes the 2'-O-methylation at nucleotide C2498 in 23S rRNA. The chain is Ribosomal RNA large subunit methyltransferase M from Histophilus somni (strain 129Pt) (Haemophilus somnus).